The primary structure comprises 626 residues: Probable metalloendopeptidase G1-type (626 aa).

H42 serves as a coordination point for Zn(2+). E45 is an active-site residue. H46 is a binding site for Zn(2+).

This sequence belongs to the peptidase M44 family. The cofactor is Zn(2+).

Its function is as follows. Seems to be involved in viral proteins maturation by cleavage at Ala-Gly-|-Xaa motifs. This is Probable metalloendopeptidase G1-type from Fowlpox virus (strain NVSL) (FPV).